The following is a 689-amino-acid chain: Small ribosomal subunit protein mS39 (689 aa).

A mitochondrion-targeting transit peptide spans Met1–Tyr37. N6-acetyllysine is present on Lys126. PPR repeat units follow at residues Ile149–Val183, Ser184–Glu219, Asn255–Ala289, Asp290–Pro330, Asn331–Pro367, Ser368–Arg404, Asp412–Lys446, Arg454–Pro488, His489–Phe523, and Pro572–Pro606. The segment at Asn665–Lys689 is disordered. The segment covering Ser673–Lys689 has biased composition (acidic residues).

Belongs to the mitochondrion-specific ribosomal protein mS39 family. Component of the mitochondrial ribosome small subunit (28S) which comprises a 12S rRNA and about 30 distinct proteins. Associated with the 12S mitochondrial rRNA (12S mt-rRNA).

Its subcellular location is the mitochondrion. In terms of biological role, mitochondrial RNA-binding protein that has a role in mitochondrial translation. The chain is Small ribosomal subunit protein mS39 (PTCD3) from Pongo abelii (Sumatran orangutan).